We begin with the raw amino-acid sequence, 161 residues long: Nucleotide-binding protein BMASAVP1_A0673 (161 aa).

The protein belongs to the YajQ family.

Its function is as follows. Nucleotide-binding protein. This Burkholderia mallei (strain SAVP1) protein is Nucleotide-binding protein BMASAVP1_A0673.